Consider the following 89-residue polypeptide: Small ribosomal subunit protein uS15 (89 aa).

This sequence belongs to the universal ribosomal protein uS15 family. Part of the 30S ribosomal subunit. Forms a bridge to the 50S subunit in the 70S ribosome, contacting the 23S rRNA.

Its function is as follows. One of the primary rRNA binding proteins, it binds directly to 16S rRNA where it helps nucleate assembly of the platform of the 30S subunit by binding and bridging several RNA helices of the 16S rRNA. In terms of biological role, forms an intersubunit bridge (bridge B4) with the 23S rRNA of the 50S subunit in the ribosome. In Shewanella baltica (strain OS185), this protein is Small ribosomal subunit protein uS15.